The primary structure comprises 429 residues: MNVLIIGSGGREHALGWKAAQNPNVETIFVAPGNAGTALEPKLENVNIAVEDIAGLVAFAKEKAIELTIVGPEVPLVLGVVDAFYEAGLPIFGPTQAAAQLEGSKAFTKDFLARHQIPTAAYANFTDIEPALAYVREQGAPIVVKADGLAAGKGVIVAMTLEEAEEAIKDMLAGNAFGEAGSRVVIEEFLDGEEASFIVMVDGENVLPMATSQDHKRVGDKDTGPNTGGMGAYSPAPVVTPEIHNRVMQEVIFPTVRGMAAEGNPYTGFLYAGLMIDKDGTPKVIEYNCRFGDPETQPIMMRMESDLVELCLAAIDKKLDQVESKWDPRASIGIVLAAGGYPAAYNKGDVISGLPQVEIEGEKVFHAGTENKGGDIVTNGGRVLCATALGNSVSEAQQRAYELAKQIRWDGMFHRNDIGYRAIAREQQK.

Residues 109–316 form the ATP-grasp domain; sequence KDFLARHQIP…LVELCLAAID (208 aa). 135-196 is an ATP binding site; sequence VREQGAPIVV…EEFLDGEEAS (62 aa). Residues 212 to 234 are disordered; sequence SQDHKRVGDKDTGPNTGGMGAYS. The segment covering 213–223 has biased composition (basic and acidic residues); it reads QDHKRVGDKDT. Mg(2+)-binding residues include Glu286 and Asn288.

It belongs to the GARS family. The cofactor is Mg(2+). It depends on Mn(2+) as a cofactor.

The enzyme catalyses 5-phospho-beta-D-ribosylamine + glycine + ATP = N(1)-(5-phospho-beta-D-ribosyl)glycinamide + ADP + phosphate + H(+). The protein operates within purine metabolism; IMP biosynthesis via de novo pathway; N(1)-(5-phospho-D-ribosyl)glycinamide from 5-phospho-alpha-D-ribose 1-diphosphate: step 2/2. The protein is Phosphoribosylamine--glycine ligase of Vibrio vulnificus (strain YJ016).